The sequence spans 240 residues: BLOC-1-related complex subunit 8 homolog (240 aa).

Disordered stretches follow at residues 1-33 (MSSILKSSTGSNHSSTSNHSSINNISQLSGSHG) and 163-240 (KTFS…EKIN). Composition is skewed to low complexity over residues 7-26 (SSTGSNHSSTSNHSSINNIS) and 163-179 (KTFSSFQQQHKIYQQQQ). A compositionally biased stretch (polar residues) spans 180–190 (TNLTPSKPTLS). A compositionally biased stretch (low complexity) spans 196–205 (DNNNNNNNLN). Residues 208 to 240 (EKIEKEEKIEKEDEGKEKDEKEKDDKDLNEKIN) show a composition bias toward basic and acidic residues. Positions 211 to 239 (EKEEKIEKEDEGKEKDEKEKDDKDLNEKI) form a coiled coil.

The protein belongs to the BORCS8 family.

It localises to the lysosome membrane. May participate in the coupling of lysosomes to microtubule plus-end-directed kinesin motor. The polypeptide is BLOC-1-related complex subunit 8 homolog (Dictyostelium discoideum (Social amoeba)).